The primary structure comprises 488 residues: Glutamyl-tRNA(Gln) amidotransferase subunit A (488 aa).

Catalysis depends on charge relay system residues lysine 77 and serine 152. Serine 176 acts as the Acyl-ester intermediate in catalysis.

Belongs to the amidase family. GatA subfamily. Heterotrimer of A, B and C subunits.

The enzyme catalyses L-glutamyl-tRNA(Gln) + L-glutamine + ATP + H2O = L-glutaminyl-tRNA(Gln) + L-glutamate + ADP + phosphate + H(+). Its function is as follows. Allows the formation of correctly charged Gln-tRNA(Gln) through the transamidation of misacylated Glu-tRNA(Gln) in organisms which lack glutaminyl-tRNA synthetase. The reaction takes place in the presence of glutamine and ATP through an activated gamma-phospho-Glu-tRNA(Gln). This chain is Glutamyl-tRNA(Gln) amidotransferase subunit A, found in Streptococcus pneumoniae (strain Hungary19A-6).